The following is a 268-amino-acid chain: 4-hydroxy-tetrahydrodipicolinate reductase (268 aa).

Residues 10–15, aspartate 36, 99–101, and 123–126 contribute to the NAD(+) site; these read GAGGRM, GTT, and APNM. Histidine 156 acts as the Proton donor/acceptor in catalysis. Histidine 157 contacts (S)-2,3,4,5-tetrahydrodipicolinate. Catalysis depends on lysine 160, which acts as the Proton donor. Residue 166 to 167 participates in (S)-2,3,4,5-tetrahydrodipicolinate binding; the sequence is GT.

This sequence belongs to the DapB family.

The protein resides in the cytoplasm. The enzyme catalyses (S)-2,3,4,5-tetrahydrodipicolinate + NAD(+) + H2O = (2S,4S)-4-hydroxy-2,3,4,5-tetrahydrodipicolinate + NADH + H(+). It catalyses the reaction (S)-2,3,4,5-tetrahydrodipicolinate + NADP(+) + H2O = (2S,4S)-4-hydroxy-2,3,4,5-tetrahydrodipicolinate + NADPH + H(+). The protein operates within amino-acid biosynthesis; L-lysine biosynthesis via DAP pathway; (S)-tetrahydrodipicolinate from L-aspartate: step 4/4. In terms of biological role, catalyzes the conversion of 4-hydroxy-tetrahydrodipicolinate (HTPA) to tetrahydrodipicolinate. The protein is 4-hydroxy-tetrahydrodipicolinate reductase of Dechloromonas aromatica (strain RCB).